A 160-amino-acid polypeptide reads, in one-letter code: MFRIGQGFDVHQFVEGRPLIIGGVHIPYEKGLLGHSDADVLLHAVADACLGAIGAGDIGRHFPDTDPRYKDADSAELLAHVWSLVRQEGYVLVNADCTIIAQKPKMAPYIEEMKKVIARLLEAERSQVNVKATTTEKLGFTGREEGVAAQVVVLLQKSEA.

A divalent metal cation-binding residues include aspartate 9 and histidine 11. Residues 9 to 11 (DVH) and 35 to 36 (HS) contribute to the 4-CDP-2-C-methyl-D-erythritol 2-phosphate site. Residue histidine 43 coordinates a divalent metal cation. 4-CDP-2-C-methyl-D-erythritol 2-phosphate is bound by residues 57–59 (DIG), 62–66 (FPDTD), 101–107 (AQKPKMA), 133–136 (TTTE), phenylalanine 140, and arginine 143.

This sequence belongs to the IspF family. Homotrimer. The cofactor is a divalent metal cation.

The catalysed reaction is 4-CDP-2-C-methyl-D-erythritol 2-phosphate = 2-C-methyl-D-erythritol 2,4-cyclic diphosphate + CMP. It participates in isoprenoid biosynthesis; isopentenyl diphosphate biosynthesis via DXP pathway; isopentenyl diphosphate from 1-deoxy-D-xylulose 5-phosphate: step 4/6. Its function is as follows. Involved in the biosynthesis of isopentenyl diphosphate (IPP) and dimethylallyl diphosphate (DMAPP), two major building blocks of isoprenoid compounds. Catalyzes the conversion of 4-diphosphocytidyl-2-C-methyl-D-erythritol 2-phosphate (CDP-ME2P) to 2-C-methyl-D-erythritol 2,4-cyclodiphosphate (ME-CPP) with a corresponding release of cytidine 5-monophosphate (CMP). In Geobacillus thermodenitrificans (strain NG80-2), this protein is 2-C-methyl-D-erythritol 2,4-cyclodiphosphate synthase.